The primary structure comprises 255 residues: 5-oxoprolinase subunit A (255 aa).

It belongs to the LamB/PxpA family. As to quaternary structure, forms a complex composed of PxpA, PxpB and PxpC.

It carries out the reaction 5-oxo-L-proline + ATP + 2 H2O = L-glutamate + ADP + phosphate + H(+). In terms of biological role, catalyzes the cleavage of 5-oxoproline to form L-glutamate coupled to the hydrolysis of ATP to ADP and inorganic phosphate. This is 5-oxoprolinase subunit A from Campylobacter jejuni subsp. doylei (strain ATCC BAA-1458 / RM4099 / 269.97).